An 891-amino-acid polypeptide reads, in one-letter code: Kinesin-like protein KIN-UB (891 aa).

The segment at 1 to 54 is disordered; that stretch reads MSGKVANATPKAAAGKPRLSAAGGGAYRRTSSGPLPSAGGGGGRASSESGVSSR. Residues 45–54 are compositionally biased toward low complexity; it reads ASSESGVSSR. The region spanning 54–400 is the Kinesin motor domain; it reads RVRVAVRLRP…IMFGQRAMKV (347 aa). 139 to 146 serves as a coordination point for ATP; it reads GQTGTGKT. A D-BOX motif is present at residues 370-378; it reads RTSLVVTIG. The stretch at 502 to 592 forms a coiled coil; it reads TSSEVGEVQN…ADETRRSLDR (91 aa). The span at 586 to 595 shows a compositional bias: basic and acidic residues; the sequence is TRRSLDRGDG. A disordered region spans residues 586 to 626; that stretch reads TRRSLDRGDGSGKIFPGFDSLMSHSRNSQPREQSNGPKPPI. Polar residues predominate over residues 607 to 621; it reads MSHSRNSQPREQSNG. 4 ARM repeats span residues 623 to 662, 664 to 704, 706 to 746, and 748 to 787; these read KPPI…NLAA, EANQ…NLAM, ETNQ…NLCG, and DKLQ…NFAK.

This sequence belongs to the TRAFAC class myosin-kinesin ATPase superfamily. Kinesin family. Ungrouped subfamily.

Its subcellular location is the cytoplasm. It localises to the cytoskeleton. This Oryza sativa subsp. japonica (Rice) protein is Kinesin-like protein KIN-UB.